The following is a 441-amino-acid chain: 5-methylthioadenosine/S-adenosylhomocysteine deaminase (441 aa).

Zn(2+) contacts are provided by H70 and H72. The substrate site is built by E99 and H191. Position 218 (H218) interacts with Zn(2+). Residues E221 and D306 each contribute to the substrate site. Residue D306 coordinates Zn(2+).

It belongs to the metallo-dependent hydrolases superfamily. MTA/SAH deaminase family. It depends on Zn(2+) as a cofactor.

The enzyme catalyses S-adenosyl-L-homocysteine + H2O + H(+) = S-inosyl-L-homocysteine + NH4(+). It catalyses the reaction S-methyl-5'-thioadenosine + H2O + H(+) = S-methyl-5'-thioinosine + NH4(+). Functionally, catalyzes the deamination of 5-methylthioadenosine and S-adenosyl-L-homocysteine into 5-methylthioinosine and S-inosyl-L-homocysteine, respectively. Is also able to deaminate adenosine. This Lawsonia intracellularis (strain PHE/MN1-00) protein is 5-methylthioadenosine/S-adenosylhomocysteine deaminase.